The sequence spans 359 residues: Probable dual-specificity RNA methyltransferase RlmN (359 aa).

Glutamate 93 (proton acceptor) is an active-site residue. The Radical SAM core domain occupies 107–337; the sequence is KSERVTLCVS…VTMRYEKGHD (231 aa). Cysteine 114 and cysteine 342 are oxidised to a cystine. Residues cysteine 121, cysteine 125, and cysteine 128 each contribute to the [4Fe-4S] cluster site. Residues 168 to 169, serine 200, 223 to 225, and asparagine 299 each bind S-adenosyl-L-methionine; these read GE and SLH. The S-methylcysteine intermediate role is filled by cysteine 342.

It belongs to the radical SAM superfamily. RlmN family. [4Fe-4S] cluster is required as a cofactor.

The protein resides in the cytoplasm. The catalysed reaction is adenosine(2503) in 23S rRNA + 2 reduced [2Fe-2S]-[ferredoxin] + 2 S-adenosyl-L-methionine = 2-methyladenosine(2503) in 23S rRNA + 5'-deoxyadenosine + L-methionine + 2 oxidized [2Fe-2S]-[ferredoxin] + S-adenosyl-L-homocysteine. It catalyses the reaction adenosine(37) in tRNA + 2 reduced [2Fe-2S]-[ferredoxin] + 2 S-adenosyl-L-methionine = 2-methyladenosine(37) in tRNA + 5'-deoxyadenosine + L-methionine + 2 oxidized [2Fe-2S]-[ferredoxin] + S-adenosyl-L-homocysteine. Functionally, specifically methylates position 2 of adenine 2503 in 23S rRNA and position 2 of adenine 37 in tRNAs. This chain is Probable dual-specificity RNA methyltransferase RlmN, found in Akkermansia muciniphila (strain ATCC BAA-835 / DSM 22959 / JCM 33894 / BCRC 81048 / CCUG 64013 / CIP 107961 / Muc).